A 562-amino-acid polypeptide reads, in one-letter code: Probable tRNA (uracil-O(2)-)-methyltransferase (562 aa).

A disordered region spans residues 520 to 546 (VSRRQQTNPKKQEATNRPKQPCWMSLN). The C3H1-type zinc-finger motif lies at 535 to 562 (NRPKQPCWMSLNHPDGCPLGPESCRYLH).

It belongs to the TRM44 family.

The protein localises to the cytoplasm. The enzyme catalyses uridine(44) in tRNA(Ser) + S-adenosyl-L-methionine = 2'-O-methyluridine(44) in tRNA(Ser) + S-adenosyl-L-homocysteine + H(+). Probable adenosyl-L-methionine (AdoMet)-dependent tRNA (uracil-O(2)-)-methyltransferase. In Caenorhabditis briggsae, this protein is Probable tRNA (uracil-O(2)-)-methyltransferase.